The sequence spans 441 residues: Cytochrome c biogenesis protein Ccs1 (441 aa).

3 helical membrane-spanning segments follow: residues 19-39, 78-98, and 164-184; these read LKLA…GTVI, TWWF…CTLA, and IGPI…LLGN.

This sequence belongs to the Ccs1/CcsB family. In terms of assembly, may interact with CcsA.

It is found in the plastid. The protein resides in the chloroplast thylakoid membrane. Required during biogenesis of c-type cytochromes (cytochrome c6 and cytochrome f) at the step of heme attachment. This Rhodomonas salina (Cryptomonas salina) protein is Cytochrome c biogenesis protein Ccs1.